The chain runs to 485 residues: Glutamate mutase epsilon subunit (485 aa).

Arginine 66 contributes to the L-glutamate binding site. Glycine 68 serves as a coordination point for adenosylcob(III)alamin. Arginine 100 is a binding site for L-glutamate. Asparagine 123 provides a ligand contact to adenosylcob(III)alamin. Residues 149–150, glutamate 171, and tyrosine 177 contribute to the L-glutamate site; that span reads RH. Residue proline 180 coordinates adenosylcob(III)alamin. Position 181 (tyrosine 181) interacts with L-glutamate. Adenosylcob(III)alamin is bound by residues phenylalanine 297, lysine 326, glutamate 330, and isoleucine 334.

The protein belongs to the methylaspartate mutase GlmE subunit family. As to quaternary structure, heterotetramer composed of 2 epsilon subunits (GlmE) and 2 sigma subunits (GlmS). GlmE exists as a homodimer and GlmS as a monomer. Adenosylcob(III)alamin serves as cofactor.

The enzyme catalyses (2S,3S)-3-methyl-L-aspartate = L-glutamate. It participates in amino-acid degradation; L-glutamate degradation via mesaconate pathway; acetate and pyruvate from L-glutamate: step 1/4. Catalyzes the carbon skeleton rearrangement of L-glutamate to L-threo-3-methylaspartate ((2S,3S)-3-methylaspartate). The sequence is that of Glutamate mutase epsilon subunit from Treponema denticola (strain ATCC 35405 / DSM 14222 / CIP 103919 / JCM 8153 / KCTC 15104).